The following is a 375-amino-acid chain: Amylovoran biosynthesis protein AmsC (375 aa).

A run of 9 helical transmembrane segments spans residues 2–22, 31–51, 93–113, 162–182, 208–228, 256–276, 287–307, 309–329, and 337–357; these read AIYWIVSYSILVFCFFELAMI, KILINYFFLIGVFALILFAGI, MVLAWVASCFTHESYFFLLFI, IAFICSLVARNYLLALLFIVL, LPLVLVIASIPLGIIGGKKLF, VFGLANLKNIAFIGAFTLYYF, VYILLIAYSIGAAVRITFSDF, IFGGRVGNLFLHTEPLLFAFL, and LLNFFMLFSITTYYLAYNTIL.

The protein localises to the cell membrane. Its pathway is glycan metabolism; exopolysaccharide biosynthesis. In terms of biological role, involved in the biosynthesis of amylovoran which functions as a virulence factor. The sequence is that of Amylovoran biosynthesis protein AmsC (amsC) from Erwinia amylovora (Fire blight bacteria).